A 171-amino-acid polypeptide reads, in one-letter code: CDP-archaeol synthase (171 aa).

Transmembrane regions (helical) follow at residues 7–27 (MFWALWYILPAYFANASPVLL), 55–75 (FLGGVSVGTLVGVLQYYLTPA), 84–104 (VLLAFLLSFGALMGDLVGSFI), 115–135 (PAVGLDQLGFLISALAFAYPV), and 141–161 (GQMLFLLIFTPLVHWGANYFA).

The protein belongs to the CDP-archaeol synthase family. It depends on Mg(2+) as a cofactor.

It localises to the cell membrane. The catalysed reaction is 2,3-bis-O-(geranylgeranyl)-sn-glycerol 1-phosphate + CTP + H(+) = CDP-2,3-bis-O-(geranylgeranyl)-sn-glycerol + diphosphate. It participates in membrane lipid metabolism; glycerophospholipid metabolism. Its function is as follows. Catalyzes the formation of CDP-2,3-bis-(O-geranylgeranyl)-sn-glycerol (CDP-archaeol) from 2,3-bis-(O-geranylgeranyl)-sn-glycerol 1-phosphate (DGGGP) and CTP. This reaction is the third ether-bond-formation step in the biosynthesis of archaeal membrane lipids. The sequence is that of CDP-archaeol synthase from Thermococcus gammatolerans (strain DSM 15229 / JCM 11827 / EJ3).